Here is a 119-residue protein sequence, read N- to C-terminus: Large ribosomal subunit protein uL24 (119 aa).

The protein belongs to the universal ribosomal protein uL24 family. Part of the 50S ribosomal subunit.

In terms of biological role, one of two assembly initiator proteins, it binds directly to the 5'-end of the 23S rRNA, where it nucleates assembly of the 50S subunit. One of the proteins that surrounds the polypeptide exit tunnel on the outside of the subunit. This chain is Large ribosomal subunit protein uL24, found in Paenarthrobacter aurescens (strain TC1).